Reading from the N-terminus, the 616-residue chain is D-glucuronyl C5-epimerase (616 aa).

Topologically, residues 1–12 (MKCLRWRSNRHR) are cytoplasmic. Residues 13–29 (IYLLVACGALFLLNRHL) traverse the membrane as a helical; Signal-anchor for type II membrane protein segment. The Extracellular portion of the chain corresponds to 30 to 616 (TQEESRIDEE…YAYGKRAKHN (587 aa)). Substrate is bound by residues Y136, 141–143 (RDR), and Q169. N188, N232, N267, and N471 each carry an N-linked (GlcNAc...) asparagine glycan. Substrate is bound by residues Y504, R562, and 574 to 580 (RWDYHAV).

This sequence belongs to the D-glucuronyl C5-epimerase family. As to quaternary structure, homodimer. As to expression, expression in comma stage embryos is strong in the hypodermis and intestine and weaker in the head region. In late embryos, larval, and adult stages, expressed primarily in hypodermis and intestine.

It localises to the cell membrane. The protein localises to the secreted. It is found in the extracellular space. The protein resides in the extracellular matrix. Its subcellular location is the basement membrane. The enzyme catalyses [heparosan-N-sulfate](n) = [heparan-N-sulfate](n). It participates in glycan metabolism; heparan sulfate biosynthesis. The protein operates within glycan metabolism; heparin biosynthesis. In terms of biological role, converts D-glucuronic acid residues adjacent to N-sulfate sugar residues to L-iduronic acids. Plays a role in the early migration of AQR and PQR neurons, which descend from the Q neuroblasts. The protein is D-glucuronyl C5-epimerase (hse-5) of Caenorhabditis elegans.